The primary structure comprises 350 residues: Probable dual-specificity RNA methyltransferase RlmN (350 aa).

Glu-91 acts as the Proton acceptor in catalysis. The Radical SAM core domain occupies 97 to 327 (YHHGNSVCIS…VTIRREMGRD (231 aa)). A disulfide bridge connects residues Cys-104 and Cys-332. Cys-111, Cys-115, and Cys-118 together coordinate [4Fe-4S] cluster. S-adenosyl-L-methionine-binding positions include 158–159 (GE), Ser-190, 213–215 (SLH), and Asn-289. Catalysis depends on Cys-332, which acts as the S-methylcysteine intermediate.

It belongs to the radical SAM superfamily. RlmN family. It depends on [4Fe-4S] cluster as a cofactor.

The protein resides in the cytoplasm. It carries out the reaction adenosine(2503) in 23S rRNA + 2 reduced [2Fe-2S]-[ferredoxin] + 2 S-adenosyl-L-methionine = 2-methyladenosine(2503) in 23S rRNA + 5'-deoxyadenosine + L-methionine + 2 oxidized [2Fe-2S]-[ferredoxin] + S-adenosyl-L-homocysteine. It catalyses the reaction adenosine(37) in tRNA + 2 reduced [2Fe-2S]-[ferredoxin] + 2 S-adenosyl-L-methionine = 2-methyladenosine(37) in tRNA + 5'-deoxyadenosine + L-methionine + 2 oxidized [2Fe-2S]-[ferredoxin] + S-adenosyl-L-homocysteine. In terms of biological role, specifically methylates position 2 of adenine 2503 in 23S rRNA and position 2 of adenine 37 in tRNAs. The polypeptide is Probable dual-specificity RNA methyltransferase RlmN (Lachnospira eligens (strain ATCC 27750 / DSM 3376 / VPI C15-48 / C15-B4) (Eubacterium eligens)).